A 380-amino-acid chain; its full sequence is Cytochrome b (380 aa).

A run of 4 helical transmembrane segments spans residues 34-54 (FGSL…LLAM), 78-99 (WLIR…YLHI), 114-134 (WNTG…GYVL), and 179-199 (FFAL…IHLT). Heme b is bound by residues His-84 and His-98. Positions 183 and 197 each coordinate heme b. An a ubiquinone-binding site is contributed by His-202. 4 consecutive transmembrane segments (helical) span residues 227–247 (LKDI…ALFS), 289–309 (LGGV…PFLH), 321–341 (LSQL…WVGS), and 348–368 (FIII…ILFP).

It belongs to the cytochrome b family. In terms of assembly, the cytochrome bc1 complex contains 11 subunits: 3 respiratory subunits (MT-CYB, CYC1 and UQCRFS1), 2 core proteins (UQCRC1 and UQCRC2) and 6 low-molecular weight proteins (UQCRH/QCR6, UQCRB/QCR7, UQCRQ/QCR8, UQCR10/QCR9, UQCR11/QCR10 and a cleavage product of UQCRFS1). This cytochrome bc1 complex then forms a dimer. Requires heme b as cofactor.

It localises to the mitochondrion inner membrane. Functionally, component of the ubiquinol-cytochrome c reductase complex (complex III or cytochrome b-c1 complex) that is part of the mitochondrial respiratory chain. The b-c1 complex mediates electron transfer from ubiquinol to cytochrome c. Contributes to the generation of a proton gradient across the mitochondrial membrane that is then used for ATP synthesis. In Daption capense (Cape petrel), this protein is Cytochrome b (MT-CYB).